The primary structure comprises 477 residues: C4-dicarboxylate transport protein 1 (477 aa).

8 helical membrane passes run 21–39, 59–76, 89–111, 162–179, 200–221, 231–253, 342–364, and 368–387; these read PYVQVLVAILLGVAVGHFY, MIIAPVIFLTVSTGIAGM, AMVYFVTFSTLALIVGLIVGNVI, ILQVLFFSVLFGIALAMV, LVGILMKAAPIGAFGAMAFTIG, LAMLVGTFYLTAFLFVFGVLGAV, VLLLLVAMLSSKGAAGVTGAGFV, and ATLSVVPAVPVAGMALILGV. The tract at residues 435-477 is disordered; sequence SAGQPLITPAPSNSAASLPVESPGWSQTPDDRAAGSKQTLAGR.

This sequence belongs to the dicarboxylate/amino acid:cation symporter (DAACS) (TC 2.A.23) family.

The protein localises to the cell inner membrane. Its function is as follows. Responsible for the transport of dicarboxylates such as succinate, fumarate, and malate from the periplasm across the membrane. This transport system plays an important role in the energy supply of rhizobium-legume symbionts. The sequence is that of C4-dicarboxylate transport protein 1 (dctA1) from Mesorhizobium japonicum (strain LMG 29417 / CECT 9101 / MAFF 303099) (Mesorhizobium loti (strain MAFF 303099)).